A 77-amino-acid chain; its full sequence is Putative membrane protein insertion efficiency factor (77 aa).

This sequence belongs to the UPF0161 family.

It localises to the cell membrane. Its function is as follows. Could be involved in insertion of integral membrane proteins into the membrane. This is Putative membrane protein insertion efficiency factor from Geobacillus sp. (strain WCH70).